Consider the following 509-residue polypeptide: Heat shock 70 kDa protein 14 (509 aa).

This sequence belongs to the heat shock protein 70 family. As to quaternary structure, component of ribosome-associated complex (RAC), a heterodimer composed of Hsp70/DnaK-type chaperone HSPA14 and Hsp40/DnaJ-type chaperone DNAJC2.

It localises to the cytoplasm. It is found in the cytosol. Its function is as follows. Component of the ribosome-associated complex (RAC), a complex involved in folding or maintaining nascent polypeptides in a folding-competent state. In the RAC complex, binds to the nascent polypeptide chain, while DNAJC2 stimulates its ATPase activity. This chain is Heat shock 70 kDa protein 14 (HSPA14), found in Pongo abelii (Sumatran orangutan).